The sequence spans 9439 residues: Extracellular matrix-binding protein ebh (9439 aa).

FIVAR domains are found at residues 1815 to 1871 (ARRR…VNSA), 1901 to 1957 (AKEQ…INDA), 1985 to 2041 (AYDT…VRDA), 2071 to 2127 (AKKR…ITSE), 2155 to 2211 (AYNK…VTQA), 2241 to 2297 (AKNR…ISSE), 2325 to 2381 (AYNK…VEDA), 2411 to 2467 (AKEK…ITEN), 2488 to 2551 (DTTS…VNNA), 2581 to 2638 (ARNR…STEI), 2665 to 2720 (AKNQ…IRTN), 2748 to 2804 (AKTA…VSDE), 2832 to 2888 (AYNQ…VNNA), 2918 to 2974 (AKEQ…ISNA), 3002 to 3058 (AYNQ…VTAA), 3088 to 3144 (AKQQ…ITNE), 3172 to 3228 (AYNQ…VAQA), 3258 to 3314 (AKNQ…ISDE), 3335 to 3398 (DTTE…VNNA), 3428 to 3484 (ARLN…ITTE), 3512 to 3567 (AKTA…IKTN), 3595 to 3650 (IKRQ…VKES), 3678 to 3733 (AKNR…IRQN), 3802 to 3860 (SMTA…IDQK), 3928 to 3983 (AMTQ…LDPA), 4056 to 4114 (AMQA…VNQK), 4182 to 4240 (SMGT…VDNA), 4308 to 4365 (AMHT…INQK), 4433 to 4491 (VMEQ…IEQA), and 4559 to 4617 (SMQT…IDQT). Over residues 2495–2507 (EVRKLSRRGDTNN) the composition is skewed to basic and acidic residues. The interval 2495 to 2514 (EVRKLSRRGDTNNKKPSSVS) is disordered. The span at 2925-2938 (AVDQVPSTEGMTQQ) shows a compositional bias: polar residues. The tract at residues 2925 to 2951 (AVDQVPSTEGMTQQTKDDYNSKQQAAQ) is disordered. Residues 4649–4674 (GYLNDPQKSGEESLVNGSNTRSEVEE) are disordered. FIVAR domains lie at 4685–4743 (AMKQ…IEQK), 4811–4869 (AMQA…IEQA), 4937–4995 (AMSN…IEQA), 5063–5115 (AMEA…VLDK), 5189–5246 (AMLG…INQL), 5314–5372 (LMGA…VTTA), 5440–5498 (AMGE…IDQA), 5566–5624 (AMKK…ITNA), 5692–5750 (AMKQ…IADT), 5818–5875 (DMST…LQDL), 5943–6000 (AMKA…IKQA), 6068–6126 (KMEE…INRT), 6194–6252 (AMQQ…IQAI), and 6320–6378 (EMGT…IADA). Residues 5699 to 5712 (QVNQDDQISNSSPF) show a composition bias toward polar residues. The segment at 5699–5719 (QVNQDDQISNSSPFINEDSDK) is disordered. Residues 6413–6434 (NNSQRQSEHDEINSAPSRTEVS) form a disordered region. 18 FIVAR domains span residues 6446–6504 (AMRQ…IEDA), 6572–6630 (AMKA…INRA), 6698–6755 (SMNQ…IDQA), 6823–6877 (TMKA…ANDE), 6949–7007 (AMKK…INTI), 7075–7133 (SMNT…VERA), 7201–7259 (DMKK…IENA), 7327–7384 (AMKH…IKQL), 7452–7510 (AMEN…IEHA), 7578–7636 (AMKA…INSI), 7704–7762 (AMET…VDIV), 7830–7888 (AMKS…VRQA), 7956–8010 (VMGK…TKQA), 8078–8137 (IMGE…IDTF), 8205–8264 (AMKS…IQGL), 8332–8391 (AMKD…VLGL), 8459–8518 (KMKL…IQHL), and 8587–8643 (AMQG…ANII). The chain crosses the membrane as a helical span at residues 9306–9324 (TVGVITLTGLLSSFWLVLA). Basic and acidic residues-rich tracts occupy residues 9363 to 9375 (DKEE…DKHS), 9386 to 9395 (EKQLSEEDIH), and 9404 to 9413 (QNSDNKDTKQ). The segment at 9363–9439 (DKEEQIQNDD…VVKTKKRSKK (77 aa)) is disordered. The segment covering 9414–9439 (KKVTSKKKKTPQSTKKVVKTKKRSKK) has biased composition (basic residues).

The protein localises to the cell membrane. The polypeptide is Extracellular matrix-binding protein ebh (ebh) (Staphylococcus epidermidis (strain ATCC 12228 / FDA PCI 1200)).